The primary structure comprises 483 residues: Low-density lipoprotein receptor-related protein 11 (483 aa).

Residues 1-32 form the signal peptide; the sequence is MATRGGGPGPGFRHRALRGLLLLCLWLPGSRP. Residues 33–433 lie on the Extracellular side of the membrane; the sequence is GEPAAPSSGV…GGEHPAPEAG (401 aa). Positions 85–172 constitute an MANSC domain; that stretch reads AVPDTIIRTQ…FAPLRGYRTY (88 aa). Residues asparagine 152 and asparagine 275 are each glycosylated (N-linked (GlcNAc...) asparagine). The region spanning 193-287 is the PKD domain; that stretch reads PVSKAGKDVV…VTVLPRPYST (95 aa). One can recognise an LDL-receptor class A domain in the interval 293-329; the sequence is ACSRYHFFCDSGCCIDIALACDGVRQCPDGSDEDFCQ. Cystine bridges form between cysteine 294–cysteine 306, cysteine 301–cysteine 319, and cysteine 313–cysteine 328. Residues 346–428 form a disordered region; it reads AQPGAMGLNE…KSGQAGGEHP (83 aa). Polar residues-rich tracts occupy residues 367-376 and 385-407; these read RATTHNQPAT and HSTQ…SSGK. Asparagine 403 carries an N-linked (GlcNAc...) asparagine glycan. The segment covering 408 to 418 has biased composition (basic and acidic residues); that stretch reads NQEEGNYDLKS. Residues 434-456 traverse the membrane as a helical segment; it reads AVLPLALGLAITVLLLLMVTCRL. Residues 457 to 483 are Cytoplasmic-facing; it reads RLVKQKLKKARPITSEESDYLINGMYL. Serine 474 is modified (phosphoserine).

This sequence belongs to the LDLR family.

The protein localises to the membrane. The protein is Low-density lipoprotein receptor-related protein 11 (Lrp11) of Mus musculus (Mouse).